The sequence spans 456 residues: MVSSRPRRRKRASATQLYQTCKAAGTCPPDVVNKVEQTTVADQILKWGSMGVFFGGLGIGSGSGSGGRAGYVPLSTGSRAIPPKSLAPDVIARPPVVVDTVAPTDPSIVSLIEESSIIQSGAPSPVIPTEGGFSITSSGTDVPAILDISSTNTVHVTSTTHHNPIFTDPSVVQPIPPVEASGRIIVSHSSITTGAAEEIPMDTFVVHSDPLSSTPVPGVSARPKVGLYSKALQQVEIVDPTFMSTPQRLITYDNPVFDNIEDTLHFEQPSIHNAPDPAFMDIITLHRPALTSRRGVVRFSRVGQRGTMYTRRGTRIGGRVHFFKDISPIASSEEIELHPLVASPNNSDLFDVYADIDDIDENILYSTIDNNTPTSTYSLYPGNSTRIANTSIPLATIPDTFLTSGPDIVFPSVPAGTPYLPVSPSIPAISVLIRGTDYYLNPAYYFRKRRKRILAY.

A Nuclear localization signal motif is present at residues 1 to 12 (MVSSRPRRRKRA). Cysteines 21 and 27 form a disulfide. Residues 446 to 454 (FRKRRKRIL) carry the Nuclear localization signal motif.

Belongs to the papillomaviridae L2 protein family. Interacts with major capsid protein L1. Interacts with E2; this interaction inhibits E2 transcriptional activity but not the DNA replication function E2. Interacts with host GADD45GIP1. Interacts with host HSPA8; this interaction is required for L2 nuclear translocation. Interacts with host importins KPNB2 and KPNB3. Forms a complex with importin alpha2-beta1 heterodimers via interaction with the importin alpha2 adapter. Interacts with host DYNLT1; this interaction is essential for virus intracellular transport during entry. Interacts (via C-terminus) with host retromer subunits VPS35 and VPS29. In terms of processing, highly phosphorylated.

Its subcellular location is the virion. It localises to the host nucleus. It is found in the host early endosome. The protein resides in the host Golgi apparatus. Its function is as follows. Minor protein of the capsid that localizes along the inner surface of the virion, within the central cavities beneath the L1 pentamers. Plays a role in capsid stabilization through interaction with the major capsid protein L1. Once the virion enters the host cell, L2 escorts the genomic DNA into the nucleus by promoting escape from the endosomal compartments and traffic through the host Golgi network. Mechanistically, the C-terminus of L2 possesses a cell-penetrating peptide that protudes from the host endosome, interacts with host cytoplasmic retromer cargo and thereby mediates the capsid delivery to the host trans-Golgi network. Plays a role through its interaction with host dynein in the intracellular microtubule-dependent transport of viral capsid toward the nucleus. Mediates the viral genome import into the nucleus through binding to host importins. Once within the nucleus, L2 localizes viral genomes to host PML bodies in order to activate early gene expression for establishment of infection. Later on, promotes late gene expression by interacting with the viral E2 protein and by inhibiting its transcriptional activation functions. During virion assembly, encapsidates the genome by direct interaction with the viral DNA. The chain is Minor capsid protein L2 from Homo sapiens (Human).